The following is a 398-amino-acid chain: Nematocin receptor 2 (398 aa).

Over 1–25 the chain is Extracellular; sequence MNNNTLNITNQRTAAAMSQIYFLVV. N-linked (GlcNAc...) asparagine glycans are attached at residues asparagine 3 and asparagine 7. Residues 26-46 traverse the membrane as a helical segment; it reads YQTAVMIVSLLGNLFLLFVIF. Topologically, residues 47–58 are cytoplasmic; that stretch reads RANQVMKRRVSP. A helical membrane pass occupies residues 59–79; it reads VQLLIIHTCVADLLFALLSLG. Over 80 to 99 the chain is Extracellular; that stretch reads TEILTLRTYPQYYGSNFVCK. A disulfide bridge links cysteine 98 with cysteine 173. The chain crosses the membrane as a helical span at residues 100–120; it reads LMRYVQMFPMYASPFLLVAIS. The Cytoplasmic segment spans residues 121 to 143; the sequence is ADRYQAICRPLAHFRSSRYRRPN. A helical transmembrane segment spans residues 144 to 164; the sequence is WMAAIAWGLALVLSIPQFFVW. The Extracellular portion of the chain corresponds to 165-187; it reads TKHSKTGRCSTIYGQNKNTVKIT. A helical transmembrane segment spans residues 188–208; it reads YVIMFNTLAWLLPSILAAVFY. At 209–271 the chain is on the cytoplasmic side; it reads YCVCKAVRLS…DRKRVQTVRL (63 aa). Residues 272–292 traverse the membrane as a helical segment; that stretch reads TITIVACNFFLWMPFCLINVI. Over 293 to 302 the chain is Extracellular; it reads QALWPEISHI. Residues 303 to 325 traverse the membrane as a helical segment; sequence MFINYVAILGNLNSCLNPWIYIL. At 326-398 the chain is on the cytoplasmic side; that stretch reads FNRSHVRKAL…DSTSLKTNSN (73 aa).

Belongs to the G-protein coupled receptor 1 family. Vasopressin/oxytocin receptor subfamily. Detected in the ADL sensory neurons, the RMED and RMEV motor neurons, and the PQR tail neuron. In males, detected in SPC tail neurons involved in spicule penetration and sperm transfer, and male-specific oblique muscles involved in vulval contact.

It is found in the cell membrane. Not directly activated by nematocin. May modulate activity of the nematocin receptor ntr-1, leading to reduced intracellular cAMP production. Plays a role in male mating behavior. The polypeptide is Nematocin receptor 2 (Caenorhabditis elegans).